We begin with the raw amino-acid sequence, 248 residues long: Pyridoxine 5'-phosphate synthase (248 aa).

Asn-10 contacts 3-amino-2-oxopropyl phosphate. 12 to 13 (DH) contacts 1-deoxy-D-xylulose 5-phosphate. Arg-21 is a 3-amino-2-oxopropyl phosphate binding site. The active-site Proton acceptor is the His-46. 1-deoxy-D-xylulose 5-phosphate contacts are provided by Arg-48 and His-53. The Proton acceptor role is filled by Glu-73. Position 103 (Thr-103) interacts with 1-deoxy-D-xylulose 5-phosphate. Catalysis depends on His-194, which acts as the Proton donor. 3-amino-2-oxopropyl phosphate is bound by residues Gly-195 and 216–217 (GH).

Belongs to the PNP synthase family. In terms of assembly, homooctamer; tetramer of dimers.

The protein resides in the cytoplasm. The catalysed reaction is 3-amino-2-oxopropyl phosphate + 1-deoxy-D-xylulose 5-phosphate = pyridoxine 5'-phosphate + phosphate + 2 H2O + H(+). It functions in the pathway cofactor biosynthesis; pyridoxine 5'-phosphate biosynthesis; pyridoxine 5'-phosphate from D-erythrose 4-phosphate: step 5/5. Catalyzes the complicated ring closure reaction between the two acyclic compounds 1-deoxy-D-xylulose-5-phosphate (DXP) and 3-amino-2-oxopropyl phosphate (1-amino-acetone-3-phosphate or AAP) to form pyridoxine 5'-phosphate (PNP) and inorganic phosphate. The sequence is that of Pyridoxine 5'-phosphate synthase from Legionella pneumophila (strain Lens).